Here is a 231-residue protein sequence, read N- to C-terminus: NADH-ubiquinone oxidoreductase chain 4 (231 aa).

The next 6 membrane-spanning stretches (helical) occupy residues 1–21, 34–54, 63–85, 89–111, 128–148, and 156–176; these read PIAG…YGII, MFLP…LTCL, IAYS…TPWG, AMTL…NTTY, ILPM…AIPP, and LLIM…LGLS.

The protein belongs to the complex I subunit 4 family.

It is found in the mitochondrion membrane. The enzyme catalyses a ubiquinone + NADH + 5 H(+)(in) = a ubiquinol + NAD(+) + 4 H(+)(out). Functionally, core subunit of the mitochondrial membrane respiratory chain NADH dehydrogenase (Complex I) that is believed to belong to the minimal assembly required for catalysis. Complex I functions in the transfer of electrons from NADH to the respiratory chain. The immediate electron acceptor for the enzyme is believed to be ubiquinone. This chain is NADH-ubiquinone oxidoreductase chain 4 (MT-ND4), found in Gloydius intermedius (Central Asian pit viper).